A 330-amino-acid chain; its full sequence is Endo-1,4-beta-xylanase (330 aa).

The 329-residue stretch at 2–330 folds into the GH10 domain; sequence CSSIPSLREV…KPAFWRVVNI (329 aa). Residue glutamate 133 is the Proton donor of the active site. The active-site Nucleophile is glutamate 240.

Belongs to the glycosyl hydrolase 10 (cellulase F) family. Cytoplasmic xylanase subfamily.

Its subcellular location is the cytoplasm. The enzyme catalyses Endohydrolysis of (1-&gt;4)-beta-D-xylosidic linkages in xylans.. It functions in the pathway glycan degradation; xylan degradation. The protein is Endo-1,4-beta-xylanase (xynA) of Geobacillus stearothermophilus (Bacillus stearothermophilus).